A 75-amino-acid polypeptide reads, in one-letter code: Ribonuclease pancreatic (75 aa).

Intrachain disulfides connect Cys-7-Cys-65 and Cys-46-Cys-53. Asn-15 is a glycosylation site (N-linked (GlcNAc...) asparagine). Substrate contacts are provided by residues 22-26 (KPVNT), Lys-47, and Arg-66.

Belongs to the pancreatic ribonuclease family. Monomer. Interacts with and forms tight 1:1 complexes with RNH1. Dimerization of two such complexes may occur. Interaction with RNH1 inhibits this protein. As to expression, pancreas.

It is found in the secreted. It carries out the reaction an [RNA] containing cytidine + H2O = an [RNA]-3'-cytidine-3'-phosphate + a 5'-hydroxy-ribonucleotide-3'-[RNA].. The enzyme catalyses an [RNA] containing uridine + H2O = an [RNA]-3'-uridine-3'-phosphate + a 5'-hydroxy-ribonucleotide-3'-[RNA].. Endonuclease that catalyzes the cleavage of RNA on the 3' side of pyrimidine nucleotides. Acts on single-stranded and double-stranded RNA. The protein is Ribonuclease pancreatic (rnase1) of Oryx leucoryx (Arabian oryx).